Here is a 660-residue protein sequence, read N- to C-terminus: Peroxisomal acyl-coenzyme A oxidase 1 (660 aa).

Phosphoserine is present on serine 26. An N6-succinyllysine mark is found at lysine 89 and lysine 90. 2 residues coordinate FAD: threonine 139 and glycine 178. Residue lysine 216 is modified to N6-acetyllysine. The residue at position 241 (lysine 241) is an N6-succinyllysine. An N6-acetyllysine mark is found at lysine 255, lysine 267, and lysine 272. At lysine 349 the chain carries N6-succinyllysine. Catalysis depends on glutamate 421, which acts as the Proton acceptor. 2 positions are modified to N6-acetyllysine; alternate: lysine 437 and lysine 446. Lysine 437 and lysine 446 each carry N6-succinyllysine; alternate. N6-acetyllysine occurs at positions 500 and 504. The residue at position 512 (lysine 512) is an N6-acetyllysine; alternate. Lysine 512 carries the post-translational modification N6-succinyllysine; alternate. Position 542 is an N6-succinyllysine (lysine 542). Lysine 637 is subject to N6-acetyllysine; alternate. An N6-succinyllysine; alternate modification is found at lysine 637. N6-succinyllysine is present on lysine 643. Serine 649 bears the Phosphoserine mark. Position 651 is an N6-acetyllysine (lysine 651). Position 654 is an N6-succinyllysine (lysine 654). The Microbody targeting signal signature appears at 658-660 (SKL).

The protein belongs to the acyl-CoA oxidase family. As to quaternary structure, homodimer. Interacts with LONP2. FAD serves as cofactor. In terms of tissue distribution, widely expressed with highest levels of isoform 1 and isoform 2 detected in testis. Isoform 1 is expressed at higher levels than isoform 2 in liver and kidney while isoform 2 levels are higher in brain, lung, muscle, white adipose tissue and testis. Levels are almost equal in heart.

The protein resides in the peroxisome. It carries out the reaction a 2,3-saturated acyl-CoA + O2 = a (2E)-enoyl-CoA + H2O2. The catalysed reaction is hexadecanoyl-CoA + O2 = (2E)-hexadecenoyl-CoA + H2O2. It catalyses the reaction dodecanoyl-CoA + O2 = (2E)-dodecenoyl-CoA + H2O2. The enzyme catalyses octanoyl-CoA + O2 = (2E)-octenoyl-CoA + H2O2. It carries out the reaction decanoyl-CoA + O2 = (2E)-decenoyl-CoA + H2O2. The catalysed reaction is tetradecanoyl-CoA + O2 = (2E)-tetradecenoyl-CoA + H2O2. It catalyses the reaction hexadecanedioyl-CoA + O2 = (2E)-hexadecenedioyl-CoA + H2O2. The enzyme catalyses (5Z,8Z,11Z,14Z,17Z)-eicosapentaenoyl-CoA + O2 = (2E,5Z,8Z,11Z,14Z,17Z)-icosahexaenoyl-CoA + H2O2. It carries out the reaction tetracosanoyl-CoA + O2 = (2E)-tetracosenoyl-CoA + H2O2. The catalysed reaction is glutaryl-CoA + O2 = (2E)-glutaconyl-CoA + H2O2. It catalyses the reaction hexanoyl-CoA + O2 = (2E)-hexenoyl-CoA + H2O2. The enzyme catalyses octadecanoyl-CoA + O2 = (2E)-octadecenoyl-CoA + H2O2. It carries out the reaction (6Z,9Z,12Z,15Z,18Z,21Z)-tetracosahexaenoyl-CoA + O2 = (2E,6Z,9Z,12Z,15Z,18Z,21Z)-tetracosaheptaenoyl-CoA + H2O2. The protein operates within lipid metabolism; peroxisomal fatty acid beta-oxidation. Its function is as follows. Involved in the initial and rate-limiting step of peroxisomal beta-oxidation of straight-chain saturated and unsaturated very-long-chain fatty acids. Catalyzes the desaturation of fatty acyl-CoAs such as palmitoyl-CoA (hexadecanoyl-CoA) to 2-trans-enoyl-CoAs ((2E)-enoyl-CoAs) such as (2E)-hexadecenoyl-CoA, and donates electrons directly to molecular oxygen (O(2)), thereby producing hydrogen peroxide (H(2)O(2)). Shows highest activity against medium-chain fatty acyl-CoAs. Shows optimum activity with a chain length of 10 carbons (decanoyl-CoA) in vitro. Functionally, is active against a much broader range of substrates and shows activity towards long-chain fatty acyl-CoAs. This is Peroxisomal acyl-coenzyme A oxidase 1 from Homo sapiens (Human).